Here is an 811-residue protein sequence, read N- to C-terminus: Phosphoinositide 3-kinase adapter protein 1 (811 aa).

Residues 8-146 enclose the TIR domain; that stretch reads RGCDILIFYS…AVRKAISEDS (139 aa). The tract at residues 10–145 is necessary and sufficient to mediate inhibition of NF-kappa-B downstream of activated TLRs; may mediate interaction with MYD88 and TIRAP; it reads CDILIFYSPD…AAVRKAISED (136 aa). The interval 146 to 169 is disordered; that stretch reads SGCDSVTDTEPEDERELPFSKQTN. A DBB domain is found at 182-318; that stretch reads VQPDRIRCGA…NIPASGLHLF (137 aa). At Y264 the chain carries Phosphotyrosine. A phosphotyrosine; by SYK mark is found at Y420, Y445, and Y460. Y513 is subject to Phosphotyrosine; by ABL1. Residues 525-551 are disordered; it reads DLANRPPVPVPRPEASAPGPPPPPDNE. Positions 530-550 are enriched in pro residues; sequence PPVPVPRPEASAPGPPPPPDN. A phosphotyrosine; by ABL1 mark is found at Y553, Y570, and Y594. The residue at position 642 (S642) is a Phosphoserine. Y694 bears the Phosphotyrosine; by ABL1 mark. The segment at 702-811 is disordered; it reads VLPARTELRR…PPPPVPPRGR (110 aa). The span at 707–716 shows a compositional bias: basic and acidic residues; it reads TELRRGDWKT. Over residues 717–740 the composition is skewed to low complexity; it reads DSMSSTASSTSNRSSTRSLLSVSS. S718 bears the Phosphoserine mark. Residues 801 to 811 are compositionally biased toward pro residues; that stretch reads HPPPPVPPRGR.

In terms of assembly, homooligomer. Interacts (phosphorylated on tyrosine residues within YXXM motifs) with PIK3R1 (via SH2 domain); required for BCR- and TLR-mediated activation of phosphoinositide 3-kinase. Interacts (via polyproline C-terminal region) with ABI1 (via SH3 domain); the interaction promotes phosphorylation of PIK3AP1 by ABL1. May interact with MYD88 and TIRAP. In terms of processing, constitutively phosphorylated. Phosphorylated on tyrosine residues in C-terminal region by ABL1. Phosphorylated on tyrosine residues within the YXXM motifs by BTK and SYK. Isoform 1 and isoform 2 are phosphorylated on tyrosine residues, most likely within the YXXM motifs, via CD19 activation. Toll-like receptor activation induces appearance of a phosphorylated form associated with membranes. As to expression, predominantly expressed in spleen (at protein level). Expressed at lower levels in thymus, liver and lung. Expressed in B-cells, macrophages and natural killer (NK) cells.

Its subcellular location is the cytoplasm. The protein resides in the cell membrane. Signaling adapter that contributes to B-cell development by linking B-cell receptor (BCR) signaling to the phosphoinositide 3-kinase (PI3K)-Akt signaling pathway. Has a complementary role to the BCR coreceptor CD19, coupling BCR and PI3K activation by providing a docking site for the PI3K subunit PIK3R1. Alternatively, links Toll-like receptor (TLR) signaling to PI3K activation, a process preventing excessive inflammatory cytokine production. Also involved in the activation of PI3K in natural killer cells. May be involved in the survival of mature B-cells via activation of REL. This chain is Phosphoinositide 3-kinase adapter protein 1 (Pik3ap1), found in Mus musculus (Mouse).